The sequence spans 338 residues: Phenylalanine--tRNA ligase alpha subunit (338 aa).

Glu253 is a Mg(2+) binding site.

Belongs to the class-II aminoacyl-tRNA synthetase family. Phe-tRNA synthetase alpha subunit type 1 subfamily. As to quaternary structure, tetramer of two alpha and two beta subunits. Mg(2+) is required as a cofactor.

The protein localises to the cytoplasm. It carries out the reaction tRNA(Phe) + L-phenylalanine + ATP = L-phenylalanyl-tRNA(Phe) + AMP + diphosphate + H(+). This is Phenylalanine--tRNA ligase alpha subunit from Legionella pneumophila (strain Lens).